The sequence spans 670 residues: Acetyl-coenzyme A synthetase (670 aa).

Residues Arg205–Arg208 and Thr326 contribute to the CoA site. Residues Gly402–Pro404, Ser426–Thr431, Asp517, Arg532, and Arg543 contribute to the ATP site. 2 residues coordinate Mg(2+): His556 and Val559. Position 601 (Arg601) interacts with CoA. Residue Lys626 is modified to N6-acetyllysine.

This sequence belongs to the ATP-dependent AMP-binding enzyme family. Mg(2+) is required as a cofactor. Post-translationally, acetylated. Deacetylation by the SIR2-homolog deacetylase activates the enzyme.

It carries out the reaction acetate + ATP + CoA = acetyl-CoA + AMP + diphosphate. Functionally, catalyzes the conversion of acetate into acetyl-CoA (AcCoA), an essential intermediate at the junction of anabolic and catabolic pathways. AcsA undergoes a two-step reaction. In the first half reaction, AcsA combines acetate with ATP to form acetyl-adenylate (AcAMP) intermediate. In the second half reaction, it can then transfer the acetyl group from AcAMP to the sulfhydryl group of CoA, forming the product AcCoA. This Pyrobaculum aerophilum (strain ATCC 51768 / DSM 7523 / JCM 9630 / CIP 104966 / NBRC 100827 / IM2) protein is Acetyl-coenzyme A synthetase.